Consider the following 527-residue polypeptide: Bifunctional purine biosynthesis protein PurH (527 aa).

Residues M1 to T149 form the MGS-like domain.

This sequence belongs to the PurH family.

The enzyme catalyses (6R)-10-formyltetrahydrofolate + 5-amino-1-(5-phospho-beta-D-ribosyl)imidazole-4-carboxamide = 5-formamido-1-(5-phospho-D-ribosyl)imidazole-4-carboxamide + (6S)-5,6,7,8-tetrahydrofolate. It carries out the reaction IMP + H2O = 5-formamido-1-(5-phospho-D-ribosyl)imidazole-4-carboxamide. It participates in purine metabolism; IMP biosynthesis via de novo pathway; 5-formamido-1-(5-phospho-D-ribosyl)imidazole-4-carboxamide from 5-amino-1-(5-phospho-D-ribosyl)imidazole-4-carboxamide (10-formyl THF route): step 1/1. Its pathway is purine metabolism; IMP biosynthesis via de novo pathway; IMP from 5-formamido-1-(5-phospho-D-ribosyl)imidazole-4-carboxamide: step 1/1. In Xanthomonas oryzae pv. oryzae (strain KACC10331 / KXO85), this protein is Bifunctional purine biosynthesis protein PurH.